The following is a 90-amino-acid chain: DNA-directed RNA polymerase subunit omega (90 aa).

The disordered stretch occupies residues 69-90 (RQEQQEQEAAELAAVSSIAHTR).

It belongs to the RNA polymerase subunit omega family. As to quaternary structure, the RNAP catalytic core consists of 2 alpha, 1 beta, 1 beta' and 1 omega subunit. When a sigma factor is associated with the core the holoenzyme is formed, which can initiate transcription.

The catalysed reaction is RNA(n) + a ribonucleoside 5'-triphosphate = RNA(n+1) + diphosphate. In terms of biological role, promotes RNA polymerase assembly. Latches the N- and C-terminal regions of the beta' subunit thereby facilitating its interaction with the beta and alpha subunits. In Vibrio atlanticus (strain LGP32) (Vibrio splendidus (strain Mel32)), this protein is DNA-directed RNA polymerase subunit omega.